The chain runs to 513 residues: Light-independent protochlorophyllide reductase subunit B (513 aa).

Residue D36 coordinates [4Fe-4S] cluster. The active-site Proton donor is D299. 434 to 435 contributes to the substrate binding site; sequence GM.

The protein belongs to the ChlB/BchB/BchZ family. In terms of assembly, protochlorophyllide reductase is composed of three subunits; ChlL, ChlN and ChlB. Forms a heterotetramer of two ChlB and two ChlN subunits. The cofactor is [4Fe-4S] cluster.

The protein localises to the plastid. It localises to the chloroplast. The catalysed reaction is chlorophyllide a + oxidized 2[4Fe-4S]-[ferredoxin] + 2 ADP + 2 phosphate = protochlorophyllide a + reduced 2[4Fe-4S]-[ferredoxin] + 2 ATP + 2 H2O. Its pathway is porphyrin-containing compound metabolism; chlorophyll biosynthesis (light-independent). Functionally, component of the dark-operative protochlorophyllide reductase (DPOR) that uses Mg-ATP and reduced ferredoxin to reduce ring D of protochlorophyllide (Pchlide) to form chlorophyllide a (Chlide). This reaction is light-independent. The NB-protein (ChlN-ChlB) is the catalytic component of the complex. The polypeptide is Light-independent protochlorophyllide reductase subunit B (Cycas taitungensis (Prince sago)).